The sequence spans 392 residues: S-adenosylmethionine synthase (392 aa).

H17 provides a ligand contact to ATP. Position 19 (D19) interacts with Mg(2+). E45 is a binding site for K(+). L-methionine contacts are provided by E58 and Q102. The tract at residues 102-112 is flexible loop; sequence QSADIAQGVDA. Residues 169–171, 235–236, D244, 250–251, A267, and K271 contribute to the ATP site; these read DAK, KF, and RK. L-methionine is bound at residue D244. K275 serves as a coordination point for L-methionine.

It belongs to the AdoMet synthase family. In terms of assembly, homotetramer; dimer of dimers. Mg(2+) serves as cofactor. Requires K(+) as cofactor.

It is found in the cytoplasm. The catalysed reaction is L-methionine + ATP + H2O = S-adenosyl-L-methionine + phosphate + diphosphate. Its pathway is amino-acid biosynthesis; S-adenosyl-L-methionine biosynthesis; S-adenosyl-L-methionine from L-methionine: step 1/1. Functionally, catalyzes the formation of S-adenosylmethionine (AdoMet) from methionine and ATP. The overall synthetic reaction is composed of two sequential steps, AdoMet formation and the subsequent tripolyphosphate hydrolysis which occurs prior to release of AdoMet from the enzyme. In Methylobacterium nodulans (strain LMG 21967 / CNCM I-2342 / ORS 2060), this protein is S-adenosylmethionine synthase.